Here is a 493-residue protein sequence, read N- to C-terminus: Cobyric acid synthase (493 aa).

The GATase cobBQ-type domain maps to 246–440 (PIDIAVIKMP…IHGVFDGIVF (195 aa)). Cys326 (nucleophile) is an active-site residue. The active site involves His432.

This sequence belongs to the CobB/CobQ family. CobQ subfamily.

The protein operates within cofactor biosynthesis; adenosylcobalamin biosynthesis. In terms of biological role, catalyzes amidations at positions B, D, E, and G on adenosylcobyrinic A,C-diamide. NH(2) groups are provided by glutamine, and one molecule of ATP is hydrogenolyzed for each amidation. In Clostridium botulinum (strain 657 / Type Ba4), this protein is Cobyric acid synthase.